A 556-amino-acid polypeptide reads, in one-letter code: Polypeptide N-acetylgalactosaminyltransferase 13 (556 aa).

The Cytoplasmic portion of the chain corresponds to 1–4 (MRRL). Residues 5-27 (VYCKVVLATSLMWVLVDVFLLLY) form a helical; Signal-anchor for type II membrane protein membrane-spanning segment. Residues 28–556 (FSECNKCDDK…WLLRNMTLGT (529 aa)) lie on the Lumenal side of the membrane. N-linked (GlcNAc...) asparagine glycosylation is found at asparagine 94 and asparagine 116. Disulfide bonds link cysteine 105-cysteine 338, cysteine 329-cysteine 407, cysteine 441-cysteine 458, cysteine 481-cysteine 496, and cysteine 522-cysteine 539. A catalytic subdomain A region spans residues 114-224 (LPNTSVVIVF…LGWLEPLLAR (111 aa)). Positions 155 and 185 each coordinate substrate. Mn(2+)-binding residues include aspartate 208 and histidine 210. A catalytic subdomain B region spans residues 284-346 (PVRTPTMAGG…TCSHVGHVFR (63 aa)). Tryptophan 315 is a substrate binding site. Residue histidine 343 participates in Mn(2+) binding. Positions 346 and 351 each coordinate substrate. The 123-residue stretch at 428–550 (YSLGEIRNVE…GSRSQQWLLR (123 aa)) folds into the Ricin B-type lectin domain. N-linked (GlcNAc...) asparagine glycosylation occurs at asparagine 551.

It belongs to the glycosyltransferase 2 family. GalNAc-T subfamily. Mn(2+) serves as cofactor.

The protein localises to the golgi apparatus membrane. It catalyses the reaction L-seryl-[protein] + UDP-N-acetyl-alpha-D-galactosamine = a 3-O-[N-acetyl-alpha-D-galactosaminyl]-L-seryl-[protein] + UDP + H(+). It carries out the reaction L-threonyl-[protein] + UDP-N-acetyl-alpha-D-galactosamine = a 3-O-[N-acetyl-alpha-D-galactosaminyl]-L-threonyl-[protein] + UDP + H(+). The protein operates within protein modification; protein glycosylation. Functionally, catalyzes the initial reaction in O-linked oligosaccharide biosynthesis, the transfer of an N-acetyl-D-galactosamine (GalNAc) residue from UDP-GalNAc to a serine or threonine residue on the protein receptor. Generates GalNAc-O-Ser/Thr structure also known as Tn antigen, which itself is immunogenic but also serves as a precursor for the synthesis of different mucin-type O-glycan core structures. Contributes to the synthesis of O-linked glycans on mucins and proteoglycans of the central nervous system. Can glycosylate both unmodified peptides and glycopeptides that already contain an O-linked GalNAc sugar. Transfers GalNAc to Thr-/Ser-rich tandem repeats GTTPSPVPTTSTTSAP of MUC5AC. Transfers GalNAc to three consecutive serine/threonine residues on SDC3 forming a triplet-Tn epitope expressed in Purkinje cells of the developing brain. May promote neurogenesis through glycosylation and stabilization of PDPN. The polypeptide is Polypeptide N-acetylgalactosaminyltransferase 13 (Galnt13) (Rattus norvegicus (Rat)).